We begin with the raw amino-acid sequence, 624 residues long: Bifunctional protein ArgH (624 aa).

The segment at 1-466 (MALWGGRFSQ…QERDNAGVKV (466 aa)) is argininosuccinate lyase. In terms of domain architecture, N-acetyltransferase spans 464–614 (VKVRPARLTD…DEVALEVNLQ (151 aa)). The probable acetyltransferase stretch occupies residues 467-624 (RPARLTDLDA…EQVIIKSSVA (158 aa)).

The protein in the N-terminal section; belongs to the lyase 1 family. Argininosuccinate lyase subfamily.

Its subcellular location is the cytoplasm. It catalyses the reaction 2-(N(omega)-L-arginino)succinate = fumarate + L-arginine. It participates in amino-acid biosynthesis; L-arginine biosynthesis; L-arginine from L-ornithine and carbamoyl phosphate: step 3/3. In Aliivibrio fischeri (strain ATCC 700601 / ES114) (Vibrio fischeri), this protein is Bifunctional protein ArgH (argH).